We begin with the raw amino-acid sequence, 149 residues long: Calmodulin (149 aa).

The residue at position 2 (A2) is an N-acetylalanine. EF-hand domains are found at residues 8-43 (EQIA…LGQN), 44-79 (PTEA…KMKD), 81-116 (DSEE…LGEK), and 117-149 (LTDE…MTSK). D21, D23, D25, T27, E32, D57, D59, N61, T63, E68, D94, D96, N98, and E105 together coordinate Ca(2+). K116 is subject to N6,N6,N6-trimethyllysine. Ca(2+) is bound by residues D130, D132, D134, Q136, and E141.

This sequence belongs to the calmodulin family.

In terms of biological role, calmodulin mediates the control of a large number of enzymes, ion channels and other proteins by Ca(2+). Among the enzymes to be stimulated by the calmodulin-Ca(2+) complex are a number of protein kinases and phosphatases. This is Calmodulin from Metridium senile (Brown sea anemone).